We begin with the raw amino-acid sequence, 156 residues long: Ribosomal RNA large subunit methyltransferase H (156 aa).

Residues L73, G104, and L123–L128 contribute to the S-adenosyl-L-methionine site.

This sequence belongs to the RNA methyltransferase RlmH family. Homodimer.

The protein localises to the cytoplasm. It carries out the reaction pseudouridine(1915) in 23S rRNA + S-adenosyl-L-methionine = N(3)-methylpseudouridine(1915) in 23S rRNA + S-adenosyl-L-homocysteine + H(+). In terms of biological role, specifically methylates the pseudouridine at position 1915 (m3Psi1915) in 23S rRNA. The sequence is that of Ribosomal RNA large subunit methyltransferase H from Aliivibrio fischeri (strain MJ11) (Vibrio fischeri).